Reading from the N-terminus, the 185-residue chain is A-type ATP synthase subunit E (185 aa).

This sequence belongs to the V-ATPase E subunit family. As to quaternary structure, has multiple subunits with at least A(3), B(3), C, D, E, F, H, I and proteolipid K(x).

It localises to the cell membrane. Its function is as follows. Component of the A-type ATP synthase that produces ATP from ADP in the presence of a proton gradient across the membrane. The polypeptide is A-type ATP synthase subunit E (Thermoplasma volcanium (strain ATCC 51530 / DSM 4299 / JCM 9571 / NBRC 15438 / GSS1)).